We begin with the raw amino-acid sequence, 602 residues long: Leucine-rich repeat-containing protein 40 (602 aa).

Positions 1-26 (MSRHMRAPRFDPRAGFHAEGKDRGPS) are disordered. Residues 8–24 (PRFDPRAGFHAEGKDRG) are compositionally biased toward basic and acidic residues. An LRR 1 repeat occupies 35 to 58 (ARSSGQLNLAGRNLGEVPQCVWRI). S71 is modified (phosphoserine). LRR repeat units lie at residues 81–103 (QTDL…DLRL), 104–126 (LPAL…AIRE), 127–149 (LDNL…EITS), 150–172 (LKNL…GFEH), 174–195 (SCLE…DFAL), 196–219 (LSSL…ISRM), 221–241 (RLKH…DVGS), 242–266 (MESL…SCRQ), 268–287 (KELH…HLQH), 288–310 (LQAI…EMAL), 311–334 (LQSL…LGNL), 336–356 (LKFL…IIAK), 398–421 (IATL…LFDA), 424–447 (TTLI…IVEL), 449–470 (EMVL…ELCL), 471–494 (LQKL…MSSL), 496–517 (KLQT…LYRI), 519–540 (TLEA…KMKL), 541–564 (MENL…LGNC), and 566–587 (QLRT…ILMK).

This Mus musculus (Mouse) protein is Leucine-rich repeat-containing protein 40 (Lrrc40).